Here is a 313-residue protein sequence, read N- to C-terminus: Porphobilinogen deaminase (313 aa).

At C242 the chain carries S-(dipyrrolylmethanemethyl)cysteine.

The protein belongs to the HMBS family. In terms of assembly, monomer. Dipyrromethane is required as a cofactor.

The catalysed reaction is 4 porphobilinogen + H2O = hydroxymethylbilane + 4 NH4(+). The protein operates within porphyrin-containing compound metabolism; protoporphyrin-IX biosynthesis; coproporphyrinogen-III from 5-aminolevulinate: step 2/4. Tetrapolymerization of the monopyrrole PBG into the hydroxymethylbilane pre-uroporphyrinogen in several discrete steps. This Photorhabdus laumondii subsp. laumondii (strain DSM 15139 / CIP 105565 / TT01) (Photorhabdus luminescens subsp. laumondii) protein is Porphobilinogen deaminase.